The chain runs to 333 residues: Phosphoribosylformylglycinamidine cyclo-ligase (333 aa).

It belongs to the AIR synthase family.

It localises to the cytoplasm. It catalyses the reaction 2-formamido-N(1)-(5-O-phospho-beta-D-ribosyl)acetamidine + ATP = 5-amino-1-(5-phospho-beta-D-ribosyl)imidazole + ADP + phosphate + H(+). Its pathway is purine metabolism; IMP biosynthesis via de novo pathway; 5-amino-1-(5-phospho-D-ribosyl)imidazole from N(2)-formyl-N(1)-(5-phospho-D-ribosyl)glycinamide: step 2/2. This Clostridium perfringens (strain ATCC 13124 / DSM 756 / JCM 1290 / NCIMB 6125 / NCTC 8237 / Type A) protein is Phosphoribosylformylglycinamidine cyclo-ligase.